A 221-amino-acid chain; its full sequence is MRLILLGAPGAGKGTQATFIKEKFGIPQISTGDMLRAAVKAGTPLGLEAKRFMDAGELVTDELIINLVKERLQQPDCANGYLFDGFPRTIPQAEAMKQAGVAIDYVLEIDVPFEEIIVRMSGRRSHAASGRTYHVKFNPPKVEGLDDVTGEPLIQRDDDKEETVKKRLEVYEAQTKPLIEYYTNWAKNGDSSTPLKAPQYRRISGLGSVDEIRERAFEALK.

Position 10 to 15 (10 to 15 (GAGKGT)) interacts with ATP. The interval 30-59 (STGDMLRAAVKAGTPLGLEAKRFMDAGELV) is NMP. Residues T31, R36, 57–59 (ELV), 85–88 (GFPR), and Q92 contribute to the AMP site. An LID region spans residues 122–159 (GRRSHAASGRTYHVKFNPPKVEGLDDVTGEPLIQRDDD). ATP-binding positions include R123 and 132–133 (TY). AMP is bound by residues R156 and R167. G207 is an ATP binding site.

It belongs to the adenylate kinase family. Monomer.

Its subcellular location is the cytoplasm. The catalysed reaction is AMP + ATP = 2 ADP. Its pathway is purine metabolism; AMP biosynthesis via salvage pathway; AMP from ADP: step 1/1. In terms of biological role, catalyzes the reversible transfer of the terminal phosphate group between ATP and AMP. Plays an important role in cellular energy homeostasis and in adenine nucleotide metabolism. This is Adenylate kinase from Paraburkholderia xenovorans (strain LB400).